Reading from the N-terminus, the 364-residue chain is Cobalt-precorrin-5B C(1)-methyltransferase (364 aa).

This sequence belongs to the CbiD family.

It catalyses the reaction Co-precorrin-5B + S-adenosyl-L-methionine = Co-precorrin-6A + S-adenosyl-L-homocysteine. The protein operates within cofactor biosynthesis; adenosylcobalamin biosynthesis; cob(II)yrinate a,c-diamide from sirohydrochlorin (anaerobic route): step 6/10. Its function is as follows. Catalyzes the methylation of C-1 in cobalt-precorrin-5B to form cobalt-precorrin-6A. This Pseudomonas putida (strain W619) protein is Cobalt-precorrin-5B C(1)-methyltransferase.